Here is a 168-residue protein sequence, read N- to C-terminus: MTDETAANGENEAGRQSQSSSLPLVVNAQYVKDFSFENPNAPQSLMADQGQPKIDLQVDVQARGLNDTVSEVVLSMRAEATRNDRTAFIVELSYAGIFTLPAQIQPEQARAILLIEAPRLLFPFARQIVAEATQNGGYPPLMLQPLDFVDLYRRQVLNRGSNGEVGHA.

Residues 1–20 (MTDETAANGENEAGRQSQSS) form a disordered region.

The protein belongs to the SecB family. Homotetramer, a dimer of dimers. One homotetramer interacts with 1 SecA dimer.

It is found in the cytoplasm. In terms of biological role, one of the proteins required for the normal export of preproteins out of the cell cytoplasm. It is a molecular chaperone that binds to a subset of precursor proteins, maintaining them in a translocation-competent state. It also specifically binds to its receptor SecA. This is Protein-export protein SecB from Rhodospirillum centenum (strain ATCC 51521 / SW).